The sequence spans 167 residues: Phosphopantetheine adenylyltransferase (167 aa).

Serine 8 is a binding site for substrate. Residues serine 8 to phenylalanine 9 and histidine 16 each bind ATP. Residues lysine 40, leucine 74, and arginine 88 each contribute to the substrate site. ATP contacts are provided by residues glycine 89–arginine 91, glutamate 99, and tryptophan 123–serine 129.

It belongs to the bacterial CoaD family. In terms of assembly, homohexamer. Mg(2+) is required as a cofactor.

Its subcellular location is the cytoplasm. The catalysed reaction is (R)-4'-phosphopantetheine + ATP + H(+) = 3'-dephospho-CoA + diphosphate. Its pathway is cofactor biosynthesis; coenzyme A biosynthesis; CoA from (R)-pantothenate: step 4/5. Reversibly transfers an adenylyl group from ATP to 4'-phosphopantetheine, yielding dephospho-CoA (dPCoA) and pyrophosphate. The protein is Phosphopantetheine adenylyltransferase of Deinococcus radiodurans (strain ATCC 13939 / DSM 20539 / JCM 16871 / CCUG 27074 / LMG 4051 / NBRC 15346 / NCIMB 9279 / VKM B-1422 / R1).